An 84-amino-acid polypeptide reads, in one-letter code: Large ribosomal subunit protein bL27 (84 aa).

Residues 1 to 29 (MAHKKGGGSTKNGRDSNPKYLGIKASGGS) form a disordered region.

It belongs to the bacterial ribosomal protein bL27 family.

The protein is Large ribosomal subunit protein bL27 of Chlorobium phaeobacteroides (strain BS1).